A 150-amino-acid polypeptide reads, in one-letter code: Guanine nucleotide-binding protein subunit gamma 2 (150 aa).

Acidic residues predominate over residues 1 to 11 (MRGEANGEEEQ). The interval 1 to 59 (MRGEANGEEEQQPPRRNHLRDDAEEEEEVERRAARPVSGQQQQQQRRRPTDVGGGAAMR) is disordered. Residues 65–97 (GKHRLSAAIARLDQELQSLQDELNELETMEPAS) are a coiled coil. The region spanning 71–137 (AAIARLDQEL…RWFQRVRSSR (67 aa)) is the G protein gamma domain.

G proteins are composed of 3 units, alpha, beta and gamma. Interacts with the beta subunit RGB1.

It localises to the cell membrane. In terms of biological role, guanine nucleotide-binding proteins (G proteins) are involved as modulators or transducers in various transmembrane signaling systems. The protein is Guanine nucleotide-binding protein subunit gamma 2 of Oryza sativa subsp. indica (Rice).